The following is a 434-amino-acid chain: Vi polysaccharide export inner-membrane protein VexD (434 aa).

The segment covering 1–50 (MENSERIKKWKEERAKVAQESRASRLQQKEDERALRQTEKSADAKSHHNP) has biased composition (basic and acidic residues). Positions 1–58 (MENSERIKKWKEERAKVAQESRASRLQQKEDERALRQTEKSADAKSHHNPDAGWSATD) are disordered. 2 helical membrane-spanning segments follow: residues 84 to 104 (LFLY…ILTS) and 409 to 429 (WLLF…LITI).

This sequence belongs to the BexC/CtrB/KpsE family.

It is found in the cell inner membrane. Functionally, may form an ATP-driven capsule polysaccharide export apparatus, in association with the VexA, VexB and VexC proteins. The protein is Vi polysaccharide export inner-membrane protein VexD (vexD) of Salmonella typhi.